A 432-amino-acid chain; its full sequence is Adenylosuccinate synthetase (432 aa).

GTP is bound by residues 13–19 (GDEGKGK) and 41–43 (GHT). The Proton acceptor role is filled by D14. Residues D14 and G41 each coordinate Mg(2+). IMP contacts are provided by residues 14 to 17 (DEGK), 39 to 42 (NAGH), T130, R144, Q225, T240, and R304. H42 (proton donor) is an active-site residue. 300-306 (ATTGRKR) serves as a coordination point for substrate. Residues R306, 332–334 (KLD), and 415–417 (STG) each bind GTP.

The protein belongs to the adenylosuccinate synthetase family. Homodimer. It depends on Mg(2+) as a cofactor.

The protein resides in the cytoplasm. The catalysed reaction is IMP + L-aspartate + GTP = N(6)-(1,2-dicarboxyethyl)-AMP + GDP + phosphate + 2 H(+). The protein operates within purine metabolism; AMP biosynthesis via de novo pathway; AMP from IMP: step 1/2. In terms of biological role, plays an important role in the de novo pathway of purine nucleotide biosynthesis. Catalyzes the first committed step in the biosynthesis of AMP from IMP. The protein is Adenylosuccinate synthetase of Pseudoalteromonas atlantica (strain T6c / ATCC BAA-1087).